A 256-amino-acid polypeptide reads, in one-letter code: Thiazole synthase (256 aa).

Catalysis depends on lysine 96, which acts as the Schiff-base intermediate with DXP. 1-deoxy-D-xylulose 5-phosphate contacts are provided by residues glycine 157, 184–185 (AG), and 206–207 (NT).

This sequence belongs to the ThiG family. In terms of assembly, homotetramer. Forms heterodimers with either ThiH or ThiS.

The protein localises to the cytoplasm. It catalyses the reaction [ThiS sulfur-carrier protein]-C-terminal-Gly-aminoethanethioate + 2-iminoacetate + 1-deoxy-D-xylulose 5-phosphate = [ThiS sulfur-carrier protein]-C-terminal Gly-Gly + 2-[(2R,5Z)-2-carboxy-4-methylthiazol-5(2H)-ylidene]ethyl phosphate + 2 H2O + H(+). It participates in cofactor biosynthesis; thiamine diphosphate biosynthesis. In terms of biological role, catalyzes the rearrangement of 1-deoxy-D-xylulose 5-phosphate (DXP) to produce the thiazole phosphate moiety of thiamine. Sulfur is provided by the thiocarboxylate moiety of the carrier protein ThiS. In vitro, sulfur can be provided by H(2)S. This is Thiazole synthase from Roseobacter denitrificans (strain ATCC 33942 / OCh 114) (Erythrobacter sp. (strain OCh 114)).